The primary structure comprises 445 residues: MSKEYFGTDGIRGRVGEGPITPEFMLKLGWAAGRVFRQEGRRNRVLIGKDTRISGYIFESALESGLAAAGVDVAMLGPMPTPAIAYLTRTFRACAGIVISASHNPFNDNGVKFFSAEGTKLPDSTEEQIEHFIRQPMEIVPSSQLGKAARFEDAKGRYIEFCKSTVPFHMSFAGMRVVLDCAQGATYQVAPSVFKELGAKVETIGVTPDGLNINHEIGSTHPDQLAAKVVEAGADLGIAFDGDGDRVVMVDHKGEIVDGDEILYIIARDKMRKGRLKGGVVGTLMTNFGAELAFGELGIPFERANVGDRYVMEALLRNDWCLGGEGSGHIVCLDRTTTGDGIISSLQVLAALSDLGITLHEAKKGMSKLPQHMINVRVSQKVDIKGHTTIQSAVANAEKQFAGKGRVLLRSSGTEPVIRVMAEGEDEAKVRSIVAELAKIVEGSV.

The active-site Phosphoserine intermediate is the Ser-102. The Mg(2+) site is built by Ser-102, Asp-241, Asp-243, and Asp-245. Ser-102 carries the post-translational modification Phosphoserine.

The protein belongs to the phosphohexose mutase family. Mg(2+) serves as cofactor. Post-translationally, activated by phosphorylation.

The enzyme catalyses alpha-D-glucosamine 1-phosphate = D-glucosamine 6-phosphate. Functionally, catalyzes the conversion of glucosamine-6-phosphate to glucosamine-1-phosphate. The sequence is that of Phosphoglucosamine mutase from Hahella chejuensis (strain KCTC 2396).